A 126-amino-acid polypeptide reads, in one-letter code: Holo-[acyl-carrier-protein] synthase (126 aa).

The Mg(2+) site is built by aspartate 8 and glutamate 57.

Belongs to the P-Pant transferase superfamily. AcpS family. Mg(2+) serves as cofactor.

Its subcellular location is the cytoplasm. It catalyses the reaction apo-[ACP] + CoA = holo-[ACP] + adenosine 3',5'-bisphosphate + H(+). Transfers the 4'-phosphopantetheine moiety from coenzyme A to a Ser of acyl-carrier-protein. This Trichlorobacter lovleyi (strain ATCC BAA-1151 / DSM 17278 / SZ) (Geobacter lovleyi) protein is Holo-[acyl-carrier-protein] synthase.